We begin with the raw amino-acid sequence, 471 residues long: Putative multidrug resistance protein MdtD (471 aa).

Over 1-11 (MTDLPDSTRWQ) the chain is Periplasmic. The chain crosses the membrane as a helical span at residues 12–32 (LWIVAFGFFMQSLDTTIVNTA). Topologically, residues 33-48 (LPSMAQSLGESPLHMH) are cytoplasmic. A helical transmembrane segment spans residues 49–69 (MVIVSYVLTVAVMLPASGWLA). At 70 to 76 (DKVGVRN) the chain is on the periplasmic side. A helical membrane pass occupies residues 77–97 (IFFTAIVLFTLGSLFCALSGT). Residues 98–101 (LNEL) lie on the Cytoplasmic side of the membrane. Residues 102 to 124 (LLARALQGVGGAMMVPVGRLTVM) form a helical membrane-spanning segment. Topologically, residues 125 to 137 (KIVPREQYMAAMT) are periplasmic. Residues 138 to 158 (FVTLPGQVGPLLGPALGGLLV) form a helical membrane-spanning segment. The Cytoplasmic portion of the chain corresponds to 159-164 (EYASWH). The chain crosses the membrane as a helical span at residues 165 to 185 (WIFLINIPVGIIGAIATLMLM). Residues 186 to 196 (PNYTMQTRRFD) lie on the Periplasmic side of the membrane. Residues 197–217 (LSGFLLLAVGMAVLTLALDGS) form a helical membrane-spanning segment. Residues 218-224 (KGTGLSP) are Cytoplasmic-facing. The helical transmembrane segment at 225 to 245 (LAITGLVAVGVVALVLYLLHA) threads the bilayer. The Periplasmic portion of the chain corresponds to 246-262 (RNNHRALFSLKLFRTRT). The chain crosses the membrane as a helical span at residues 263-283 (FSLGLAGSFAGRIGSGMLPFM). At 284-285 (TP) the chain is on the cytoplasmic side. The chain crosses the membrane as a helical span at residues 286-306 (VFLQIGLGFSPFHAGLMMIPM). The Periplasmic portion of the chain corresponds to 307 to 341 (VLGSMGMKRIVVQVVNRFGYRRVLVATTLGLSLVT). The helical transmembrane segment at 342–362 (LLFMTTALLGWYYVLPFVLFL) threads the bilayer. The Cytoplasmic segment spans residues 363 to 395 (QGMVNSTRFSSMNTLTLKDLPDNLASSGNSLLS). The chain crosses the membrane as a helical span at residues 396 to 416 (MIMQLSMSIGVTIAGLLLGLF). The Periplasmic segment spans residues 417 to 430 (GSQHVSVDSGTTQT). A helical membrane pass occupies residues 431–451 (VFMYTWLSMAFIIALPAFIFA). Residues 452 to 471 (RVPNDTHQNVAISRRKRSAQ) lie on the Cytoplasmic side of the membrane.

The protein belongs to the major facilitator superfamily. TCR/Tet family.

It localises to the cell inner membrane. The sequence is that of Putative multidrug resistance protein MdtD from Escherichia coli O127:H6 (strain E2348/69 / EPEC).